The primary structure comprises 256 residues: Type III pantothenate kinase (256 aa).

6-13 (DVGNSHIY) contributes to the ATP binding site. Residues tyrosine 99 and 106–109 (GADR) contribute to the substrate site. Aspartate 108 acts as the Proton acceptor in catalysis. Aspartate 129 lines the K(+) pocket. Threonine 132 contacts ATP. Threonine 184 is a substrate binding site.

Belongs to the type III pantothenate kinase family. Homodimer. The cofactor is NH4(+). It depends on K(+) as a cofactor.

It is found in the cytoplasm. The enzyme catalyses (R)-pantothenate + ATP = (R)-4'-phosphopantothenate + ADP + H(+). It participates in cofactor biosynthesis; coenzyme A biosynthesis; CoA from (R)-pantothenate: step 1/5. Its function is as follows. Catalyzes the phosphorylation of pantothenate (Pan), the first step in CoA biosynthesis. In Legionella pneumophila (strain Paris), this protein is Type III pantothenate kinase.